Consider the following 67-residue polypeptide: Large ribosomal subunit protein bL35 (67 aa).

Belongs to the bacterial ribosomal protein bL35 family.

This chain is Large ribosomal subunit protein bL35, found in Zymomonas mobilis subsp. mobilis (strain ATCC 31821 / ZM4 / CP4).